We begin with the raw amino-acid sequence, 174 residues long: NADH-ubiquinone oxidoreductase chain 6 (174 aa).

4 consecutive transmembrane segments (helical) span residues 25–45 (SMGL…GIYV), 48–68 (FWFS…LFIY), 82–102 (FKLT…FFIL), and 143–163 (LITL…VKIT).

It belongs to the complex I subunit 6 family.

It localises to the mitochondrion membrane. The catalysed reaction is a ubiquinone + NADH + 5 H(+)(in) = a ubiquinol + NAD(+) + 4 H(+)(out). In terms of biological role, core subunit of the mitochondrial membrane respiratory chain NADH dehydrogenase (Complex I) that is believed to belong to the minimal assembly required for catalysis. Complex I functions in the transfer of electrons from NADH to the respiratory chain. The immediate electron acceptor for the enzyme is believed to be ubiquinone. This Anopheles gambiae (African malaria mosquito) protein is NADH-ubiquinone oxidoreductase chain 6 (mt:ND6).